A 202-amino-acid chain; its full sequence is Holliday junction branch migration complex subunit RuvA (202 aa).

Residues 1 to 64 are domain I; the sequence is MIGYLKGQIL…YDGTVLYGFL (64 aa). The segment at 65-146 is domain II; it reads TKEDKQLWAI…AVTIAGVPKI (82 aa). Residues 147–155 form a flexible linker region; that stretch reads KIEGEAPFM. The domain III stretch occupies residues 155 to 202; the sequence is MSEVMMALTALGYSPMEARKAIDQLYKTGLANDSVENIIRAALRILKK.

The protein belongs to the RuvA family. In terms of assembly, homotetramer. Forms an RuvA(8)-RuvB(12)-Holliday junction (HJ) complex. HJ DNA is sandwiched between 2 RuvA tetramers; dsDNA enters through RuvA and exits via RuvB. An RuvB hexamer assembles on each DNA strand where it exits the tetramer. Each RuvB hexamer is contacted by two RuvA subunits (via domain III) on 2 adjacent RuvB subunits; this complex drives branch migration. In the full resolvosome a probable DNA-RuvA(4)-RuvB(12)-RuvC(2) complex forms which resolves the HJ.

The protein localises to the cytoplasm. Its function is as follows. The RuvA-RuvB-RuvC complex processes Holliday junction (HJ) DNA during genetic recombination and DNA repair, while the RuvA-RuvB complex plays an important role in the rescue of blocked DNA replication forks via replication fork reversal (RFR). RuvA specifically binds to HJ cruciform DNA, conferring on it an open structure. The RuvB hexamer acts as an ATP-dependent pump, pulling dsDNA into and through the RuvAB complex. HJ branch migration allows RuvC to scan DNA until it finds its consensus sequence, where it cleaves and resolves the cruciform DNA. The sequence is that of Holliday junction branch migration complex subunit RuvA from Elusimicrobium minutum (strain Pei191).